The sequence spans 359 residues: CMP-N-acetylneuraminate-poly-alpha-2,8-sialyltransferase (359 aa).

Residues 1–7 are Cytoplasmic-facing; the sequence is MRSIRKR. A helical; Signal-anchor for type II membrane protein membrane pass occupies residues 8 to 20; that stretch reads WTICTISLLLIFY. The Lumenal portion of the chain corresponds to 21–359; that stretch reads KTKEIARTEE…KLTTGKCVKQ (339 aa). 3 N-linked (GlcNAc...) asparagine glycosylation sites follow: N50, N74, and N119. 2 disulfides stabilise this stretch: C142–C292 and C156–C356. Residues N147 and N170 each contribute to the CMP-N-acetyl-beta-neuraminate site. N204 and N219 each carry an N-linked (GlcNAc...) asparagine glycan. S279, T280, G281, and W301 together coordinate CMP-N-acetyl-beta-neuraminate. Catalysis depends on H331, which acts as the Proton donor/acceptor.

Belongs to the glycosyltransferase 29 family. Autopolysialylated.

The protein resides in the golgi apparatus membrane. It localises to the secreted. The catalysed reaction is [N-acetyl-alpha-D-neuraminosyl-(2-&gt;8)](n) + CMP-N-acetyl-beta-neuraminate = [N-acetyl-alpha-D-neuraminosyl-(2-&gt;8)](n+1) + CMP + H(+). Functionally, catalyzes the transfer of a sialic acid from a CMP-linked sialic acid donor onto a terminal alpha-2,3-, alpha-2,6-, or alpha-2,8-linked sialic acid of an N-linked glycan protein acceptor through alpha-2,8-linkages. Therefore, participates in polysialic acid synthesis on various sialylated N-acetyllactosaminyl oligosaccharides, including NCAM1 N-glycans, FETUB N-glycans and AHSG. It is noteworthy that alpha-2,3-linked sialic acid is apparently a better acceptor than alpha-2,6-linked sialic acid. This is CMP-N-acetylneuraminate-poly-alpha-2,8-sialyltransferase (ST8SIA4) from Pan troglodytes (Chimpanzee).